A 131-amino-acid polypeptide reads, in one-letter code: Lysosomal enzyme trafficking factor (131 aa).

Transmembrane regions (helical) follow at residues 8–28 (MGWI…YYVF) and 66–86 (LPFW…FLFL).

It belongs to the LYSET family.

The protein resides in the golgi apparatus membrane. In terms of biological role, required for mannose-6-phosphate-dependent trafficking of lysosomal enzymes. LYSET bridges GlcNAc-1-phosphate transferase (GNPTAB), to the membrane-bound transcription factor site-1 protease (MBTPS1), thus allowing proteolytic activation of the GNPTAB. GNPTAB is involved in the regulation of M6P-dependent Golgi-to-lysosome trafficking of lysosomal enzymes. LYSET is thus an essential factor for maturation and delivery of lysosomal hydrolases. In Xenopus laevis (African clawed frog), this protein is Lysosomal enzyme trafficking factor (lyset-a).